A 298-amino-acid polypeptide reads, in one-letter code: Probable tRNA(His) guanylyltransferase (298 aa).

Mg(2+) contacts are provided by Asp-58, Gly-59, and Asp-105. GTP contacts are provided by residues 58-63 and 104-105; these read DGRNFH and SD.

It belongs to the tRNA(His) guanylyltransferase family. Homotetramer. Interacts with MFN1 and MFN2; functions as a guanyl-nucleotide exchange factor/GEF for MFN2 and also probably MFN1. Mg(2+) serves as cofactor. In terms of tissue distribution, expressed in many tissues.

Its subcellular location is the cytoplasm. It is found in the mitochondrion outer membrane. It catalyses the reaction a 5'-end ribonucleotide-tRNA(His) + GTP + ATP + H2O = a 5'-end phospho-guanosine-ribonucleotide-tRNA(His) + AMP + 2 diphosphate + H(+). In terms of biological role, adds a GMP to the 5'-end of tRNA(His) after transcription and RNase P cleavage. This step is essential for proper recognition of the tRNA and for the fidelity of protein synthesis. Also functions as a guanyl-nucleotide exchange factor/GEF for the MFN1 and MFN2 mitofusins thereby regulating mitochondrial fusion. By regulating both mitochondrial dynamics and bioenergetic function, it contributes to cell survival following oxidative stress. The sequence is that of Probable tRNA(His) guanylyltransferase (THG1L) from Homo sapiens (Human).